The chain runs to 437 residues: Four-jointed box protein 1 (437 aa).

An N-terminal signal peptide occupies residues 1–24; it reads MGRRMRGAAATAGLWLLALGSLLA. Disordered stretches follow at residues 33-66 and 88-116; these read RTEL…PLPP and AGAD…EESA. Over residues 57-66 the composition is skewed to pro residues; the sequence is APAPRFPLPP. An N-linked (GlcNAc...) asparagine glycan is attached at asparagine 248.

It belongs to the FJX1/FJ family. Post-translationally, glycosylated. Undergoes proteolytic cleavage.

The protein localises to the secreted. Its function is as follows. Acts as an inhibitor of dendrite extension and branching. The protein is Four-jointed box protein 1 (FJX1) of Homo sapiens (Human).